Reading from the N-terminus, the 417-residue chain is D-amino acid dehydrogenase (417 aa).

3–17 (VIVIGSGVIGLTSAW) lines the FAD pocket.

It belongs to the DadA oxidoreductase family. It depends on FAD as a cofactor.

It catalyses the reaction a D-alpha-amino acid + A + H2O = a 2-oxocarboxylate + AH2 + NH4(+). It functions in the pathway amino-acid degradation; D-alanine degradation; NH(3) and pyruvate from D-alanine: step 1/1. Oxidative deamination of D-amino acids. The polypeptide is D-amino acid dehydrogenase (Vibrio atlanticus (strain LGP32) (Vibrio splendidus (strain Mel32))).